The following is a 758-amino-acid chain: MLTIKRLLLNQNLFKSSCNSTGIISINYNSNNKICFFSSSSTLINKTNEILDIEDNNNNNNEISSSPLFLKETIKEFKLKKEFIEKYSKKKAPFGFGVLGEIVYRRSYSRVKEDNTNEQWFETVERVVNGTYNIQRKWIERHGLEWNQNKAQKSAQEMYNRIFEMKFLPPGRGLYSCGSSTTESKGLFAALNNCAFVSTLDIKKNPSKPFIFLMDASMLGVGVGFDTKGENSIIIKGQLPPPPPQQQPQQQQQQHGQNNNIFIVPDSREGWVESVQLLLDSYFLKRNNPIFDYSSIRKKGEPIKGFGGVCCGYEPLKELHDEIRALLNKCIGKPISSTNIVDLMNLIGKCVVSGNVRQAAEIAFGDPNSQEYIDLKNYQINPQRASFGWCSNNSVFAELGMDYSKVCQSILHNGEPGLAWLDNMKAYSRMVPTELDYKDRRAMGGNPCLEQTLESYELCCLVETFPNNHESLEDYLKTLKYAFLYAKTVTLGSTQWPDTNKVLLRNRRIGCSMSGIAQFIHFNGLHQLKDWCVNGFKLLNELDEKYSEWLAIPKSIKRTSIKPSGTVSLLAGATPGMHYPISEYYIRRIRIQKESNLIPPLVEAGYHVEPAFENSTNVVVEIPIHSGKGIRSANSITMWEQLSLASFLQKYWADNQVSCTVSFDPIKEGPQLKHALDYFQYQLKGVSFLPNSSTTTSVYKQMPYEEIDETRYNQIIANLKPVDFQKLNNSPLEPTPDKFCDSSSCTIVSDNSETLNNL.

Cysteines 194 and 459 form a disulfide. The interval 233-256 (IIIKGQLPPPPPQQQPQQQQQQHG) is disordered. Residues Cys-448 and Glu-450 contribute to the active site.

Belongs to the class II ribonucleoside-triphosphate reductase family. In terms of assembly, monomer. The cofactor is adenosylcob(III)alamin.

The catalysed reaction is a 2'-deoxyribonucleoside 5'-triphosphate + [thioredoxin]-disulfide + H2O = a ribonucleoside 5'-triphosphate + [thioredoxin]-dithiol. The sequence is that of Probable adenosylcobalamin-dependent ribonucleoside-triphosphate reductase (rtpR) from Dictyostelium discoideum (Social amoeba).